The primary structure comprises 318 residues: NADH-ubiquinone oxidoreductase chain 1 (318 aa).

8 helical membrane-spanning segments follow: residues 3–23, 69–89, 98–118, 135–155, 171–191, 217–237, 253–273, and 294–314; these read TMNLLLLIMSTLAAMAFLTLV, ILYITAPALAFSIALLLWTPL, FNLGLLFILATSSLTVYSILW, AVAQMISYEVTLSIILLSILL, HLWLILPSWPLAMMWFTSTLA, AGPFALFFMAEYMNIIMMNAL, ELFTTSFTIKTLLLTSLFLWI, and LPLTLALLMWSTSMPIAISSI.

It belongs to the complex I subunit 1 family. Core subunit of respiratory chain NADH dehydrogenase (Complex I) which is composed of 45 different subunits.

Its subcellular location is the mitochondrion inner membrane. It carries out the reaction a ubiquinone + NADH + 5 H(+)(in) = a ubiquinol + NAD(+) + 4 H(+)(out). Core subunit of the mitochondrial membrane respiratory chain NADH dehydrogenase (Complex I) which catalyzes electron transfer from NADH through the respiratory chain, using ubiquinone as an electron acceptor. Essential for the catalytic activity and assembly of complex I. The polypeptide is NADH-ubiquinone oxidoreductase chain 1 (MT-ND1) (Papio hamadryas (Hamadryas baboon)).